Reading from the N-terminus, the 1482-residue chain is Chromosome partition protein MukB (1482 aa).

34–41 (GGNGAGKS) is a binding site for ATP. 6 coiled-coil regions span residues 337–468 (LNLV…LSVA), 509–604 (QHLA…APIW), 780–805 (RAAR…ATLS), 835–1044 (EAEI…ELVD), 1070–1115 (TNRA…TAKA), and 1210–1265 (EAIE…LQAV). Positions 666 to 783 (PGGAEDQRLV…AVPLFGRAAR (118 aa)) are flexible hinge.

This sequence belongs to the SMC family. MukB subfamily. Homodimerization via its hinge domain. Binds to DNA via its C-terminal region. Interacts, and probably forms a ternary complex, with MukE and MukF via its C-terminal region. The complex formation is stimulated by calcium or magnesium. Interacts with tubulin-related protein FtsZ.

The protein localises to the cytoplasm. The protein resides in the nucleoid. In terms of biological role, plays a central role in chromosome condensation, segregation and cell cycle progression. Functions as a homodimer, which is essential for chromosome partition. Involved in negative DNA supercoiling in vivo, and by this means organize and compact chromosomes. May achieve or facilitate chromosome segregation by condensation DNA from both sides of a centrally located replisome during cell division. The sequence is that of Chromosome partition protein MukB from Serratia proteamaculans (strain 568).